Consider the following 377-residue polypeptide: MQQRVIVGMSGGVDSSVSAALLLQQGYQVEGLFMKNWEEDDGTEYCTALEDLADAQAVADKIGIKLHTANFAMEYWDRVFEHFLAEYAAGRTPNPDILCNKEIKFRAFIDHAMTLGADFIATGHYTRRGESMQNSRGESYAPLLRGVDNNKDQSYFLHAVHGREINKTLFPVGEIEKPEVRKIAEKLDLATAKKKDSTGICFIGERRFNDFLKQYLPAQPGKIVLDNGKEVGEHHGLMYYTLGQRGGIGLGGLKGAAEGAWFVLHKDLENNRLVIGQGHEHPLMQSTTLWSQDIDWVAGEQDIPASGFRCTAKTRYRQPDQACTIYRDEDRNNGVRVEFDEPQRAVTPGQSVVFYTNEICLGGGVILHTDAPTPDFI.

ATP-binding positions include 8–15 (GMSGGVDS) and Met34. Positions 94–96 (NPD) are interaction with target base in tRNA. The Nucleophile role is filled by Cys99. Residues Cys99 and Cys201 are joined by a disulfide bond. Residue Gly123 coordinates ATP. The segment at 151 to 153 (KDQ) is interaction with tRNA. Cys201 acts as the Cysteine persulfide intermediate in catalysis. The interaction with tRNA stretch occupies residues 315–316 (RY).

The protein belongs to the MnmA/TRMU family.

It is found in the cytoplasm. It catalyses the reaction S-sulfanyl-L-cysteinyl-[protein] + uridine(34) in tRNA + AH2 + ATP = 2-thiouridine(34) in tRNA + L-cysteinyl-[protein] + A + AMP + diphosphate + H(+). Functionally, catalyzes the 2-thiolation of uridine at the wobble position (U34) of tRNA, leading to the formation of s(2)U34. The protein is tRNA-specific 2-thiouridylase MnmA of Acinetobacter baylyi (strain ATCC 33305 / BD413 / ADP1).